The chain runs to 566 residues: Putative ABC transporter ATP-binding protein lp_0149 (566 aa).

ABC transporter domains follow at residues 6 to 247 (ISFK…GLRE) and 302 to 536 (LAIE…ASLA). Residues 40 to 47 (GPSGSGKS) and 335 to 342 (GQNGTGKS) contribute to the ATP site.

The protein belongs to the ABC transporter superfamily.

Its subcellular location is the cell membrane. Functionally, probably part of an ABC transporter complex. Responsible for energy coupling to the transport system. In Lactiplantibacillus plantarum (strain ATCC BAA-793 / NCIMB 8826 / WCFS1) (Lactobacillus plantarum), this protein is Putative ABC transporter ATP-binding protein lp_0149.